We begin with the raw amino-acid sequence, 84 residues long: U8-theraphotoxin-Hhn1e (84 aa).

Positions 1–21 are cleaved as a signal peptide; sequence MKVVLLVCLVWMMAMMELVSC. 5 disulfides stabilise this stretch: C23–C35, C29–C44, C34–C67, C54–C75, and C69–C81.

Belongs to the AVIT (prokineticin) family. As to expression, expressed by the venom gland.

Its subcellular location is the secreted. This Cyriopagopus hainanus (Chinese bird spider) protein is U8-theraphotoxin-Hhn1e.